Reading from the N-terminus, the 69-residue chain is Toxin Lc a (69 aa).

Cystine bridges form between Cys3–Cys20, Cys13–Cys41, Cys45–Cys56, and Cys57–Cys62.

Belongs to the three-finger toxin family. Long-chain subfamily. Type II alpha-neurotoxin sub-subfamily. As to expression, expressed by the venom gland.

It is found in the secreted. Functionally, binds with high affinity to muscular nicotinic acetylcholine receptors (nAChRs), whereas it binds with a low affinity to neuronal alpha-7/CHRNA7 nAChRs. This is Toxin Lc a from Laticauda colubrina (Yellow-lipped sea krait).